A 382-amino-acid chain; its full sequence is Galactokinase (382 aa).

Position 34–37 (34–37 (EHTD)) interacts with substrate. ATP is bound at residue 124-130 (GAGLSSS). Mg(2+) is bound by residues Ser130 and Glu162. Asp174 functions as the Proton acceptor in the catalytic mechanism. Position 223 (Tyr223) interacts with substrate.

The protein belongs to the GHMP kinase family. GalK subfamily.

It localises to the cytoplasm. It catalyses the reaction alpha-D-galactose + ATP = alpha-D-galactose 1-phosphate + ADP + H(+). The protein operates within carbohydrate metabolism; galactose metabolism. In terms of biological role, catalyzes the transfer of the gamma-phosphate of ATP to D-galactose to form alpha-D-galactose-1-phosphate (Gal-1-P). The protein is Galactokinase of Salmonella paratyphi B (strain ATCC BAA-1250 / SPB7).